A 326-amino-acid polypeptide reads, in one-letter code: Amino acid--[acyl-carrier-protein] ligase 1 (326 aa).

Position 131 (C131) interacts with Zn(2+). ATP-binding positions include R159, E161, and 168–169 (RL). E176 lines the Zn(2+) pocket. E176 provides a ligand contact to an L-alpha-amino acid. ATP-binding positions include K235 and 250 to 253 (ACMS). A Zn(2+)-binding site is contributed by C279. R286 serves as a coordination point for ATP.

Belongs to the class-II aminoacyl-tRNA synthetase family. Amino acid--[acyl-carrier-protein] ligase subfamily. Homodimer. Zn(2+) serves as cofactor.

The catalysed reaction is an L-alpha-amino acid + holo-[ACP] + ATP = an L-alpha-aminoacyl-[ACP] + AMP + diphosphate. Functionally, catalyzes the ATP-dependent activation of L-glycine and its transfer to the phosphopantetheine prosthetic group covalently attached to the vicinal carrier protein bsr0959 of yet unknown function. May participate in nonribosomal peptide synthesis or related processes. L-alanine is a poor substrate whereas L-serine or D-amino acids are not substrates for ATP-dependent activation. Does not display tRNA aminoacylation activity. The polypeptide is Amino acid--[acyl-carrier-protein] ligase 1 (Bradyrhizobium diazoefficiens (strain JCM 10833 / BCRC 13528 / IAM 13628 / NBRC 14792 / USDA 110)).